Consider the following 138-residue polypeptide: Large ribosomal subunit protein bL19 (138 aa).

This sequence belongs to the bacterial ribosomal protein bL19 family.

This protein is located at the 30S-50S ribosomal subunit interface and may play a role in the structure and function of the aminoacyl-tRNA binding site. This Rickettsia akari (strain Hartford) protein is Large ribosomal subunit protein bL19.